Consider the following 313-residue polypeptide: Homoserine O-succinyltransferase (313 aa).

Residue Cys142 is the Acyl-thioester intermediate of the active site. Residues Lys163 and Ser192 each contribute to the substrate site. His235 serves as the catalytic Proton acceptor. Residue Glu237 is part of the active site. Residue Arg249 participates in substrate binding.

This sequence belongs to the MetA family.

It localises to the cytoplasm. It catalyses the reaction L-homoserine + succinyl-CoA = O-succinyl-L-homoserine + CoA. It participates in amino-acid biosynthesis; L-methionine biosynthesis via de novo pathway; O-succinyl-L-homoserine from L-homoserine: step 1/1. In terms of biological role, transfers a succinyl group from succinyl-CoA to L-homoserine, forming succinyl-L-homoserine. The sequence is that of Homoserine O-succinyltransferase from Vibrio vulnificus (strain YJ016).